We begin with the raw amino-acid sequence, 455 residues long: MTNETWVQVREGLLKRVGRNNFVTWIEPLRLMGLDEGVARFEVPTLFFGDWVQRNFADHIRMRLTEAGSPVERLEFAVSNTPRAPLKEVKAAAPAASPARARPAPPEEDLRGAPLDARFTFDSFVVGKPNELAHAAARRVAEGGPVTFNPLFLYGGVGLGKTHLMHAIAHDLQKRQPGARVLYLSAEQFMYRFVQALREREILGFKELFRSVDVLMVDDVQFIAGKDSTQEEFFHTFNALVDQNKQIVISADRAPGEIKDLEERIKSRLQCGLVVDLHPTDYELRLGILQQKADFYREQYRGLVIADGVLEFLAHRITTNVRVLEGALTRLFAFASLVGREITLDLAQDCLADILRASDRKVTIEEIQRKVAEHYNIRLSDMIGPKRLRTIARPRQVAMYLAKQLTPRSLPEIGRRFGGRDHTTIMHGVRKIEELMATDSQLADDLQLLRRLLQA.

The interval 1–70 is domain I, interacts with DnaA modulators; it reads MTNETWVQVR…RMRLTEAGSP (70 aa). Residues 70–113 are domain II; the sequence is PVERLEFAVSNTPRAPLKEVKAAAPAASPARARPAPPEEDLRGA. A disordered region spans residues 87-109; sequence KEVKAAAPAASPARARPAPPEED. Positions 91-102 are enriched in low complexity; the sequence is AAAPAASPARAR. The segment at 114–335 is domain III, AAA+ region; it reads PLDARFTFDS…GALTRLFAFA (222 aa). Positions 158, 160, 161, and 162 each coordinate ATP. Positions 336-455 are domain IV, binds dsDNA; that stretch reads SLVGREITLD…LQLLRRLLQA (120 aa).

This sequence belongs to the DnaA family. As to quaternary structure, oligomerizes as a right-handed, spiral filament on DNA at oriC.

The protein resides in the cytoplasm. Its function is as follows. Plays an essential role in the initiation and regulation of chromosomal replication. ATP-DnaA binds to the origin of replication (oriC) to initiate formation of the DNA replication initiation complex once per cell cycle. Binds the DnaA box (a 9 base pair repeat at the origin) and separates the double-stranded (ds)DNA. Forms a right-handed helical filament on oriC DNA; dsDNA binds to the exterior of the filament while single-stranded (ss)DNA is stabiized in the filament's interior. The ATP-DnaA-oriC complex binds and stabilizes one strand of the AT-rich DNA unwinding element (DUE), permitting loading of DNA polymerase. After initiation quickly degrades to an ADP-DnaA complex that is not apt for DNA replication. Binds acidic phospholipids. This chain is Chromosomal replication initiator protein DnaA, found in Cereibacter sphaeroides (strain ATCC 17029 / ATH 2.4.9) (Rhodobacter sphaeroides).